Here is a 121-residue protein sequence, read N- to C-terminus: Ribosome-binding factor A (121 aa).

Belongs to the RbfA family. As to quaternary structure, monomer. Binds 30S ribosomal subunits, but not 50S ribosomal subunits or 70S ribosomes.

Its subcellular location is the cytoplasm. Its function is as follows. One of several proteins that assist in the late maturation steps of the functional core of the 30S ribosomal subunit. Associates with free 30S ribosomal subunits (but not with 30S subunits that are part of 70S ribosomes or polysomes). Required for efficient processing of 16S rRNA. May interact with the 5'-terminal helix region of 16S rRNA. In Clostridium novyi (strain NT), this protein is Ribosome-binding factor A.